The primary structure comprises 83 residues: Toxin CjTL8 (83 aa).

The first 20 residues, 1–20 (MSSAIKILALLMVLVALAQA), serve as a signal peptide directing secretion. The propeptide occupies 21-44 (KPRKDYRAYPDFDDKSVILEDDKR). Phe81 bears the Phenylalanine amide mark.

Post-translationally, contains 3 disulfide bonds.

It localises to the secreted. The protein resides in the nematocyst. In vivo, induces immediate paralysis on shrimps (C.multidentata), followed by death when high doses are injected. No activity is observed when injected into fly larvae (M.domestica). This Epiactis japonica (Sea anemone) protein is Toxin CjTL8.